Here is an 833-residue protein sequence, read N- to C-terminus: AdoMet-dependent rRNA methyltransferase SPB1 (833 aa).

Gly59, Trp61, Asp79, Asp95, and Asp120 together coordinate S-adenosyl-L-methionine. Lys160 acts as the Proton acceptor in catalysis. Coiled-coil stretches lie at residues 348–389 (EEEQ…QLNM) and 453–481 (RDEL…SERD). Basic and acidic residues predominate over residues 477–493 (KSERDAKFRAKQARESS). Disordered stretches follow at residues 477–532 (KSER…SDDD), 592–645 (KRKL…EKHS), and 776–810 (VTKK…GKYK). Composition is skewed to acidic residues over residues 505 to 532 (QSDE…SDDD) and 622 to 634 (EDGD…DSEE). A compositionally biased stretch (basic and acidic residues) spans 635-645 (EAKRTKQEKHS). Positions 730–782 (AEAKARKKHRAVARLEKLKKKAGLINDDSDKSEKDKAEEIAKLMRKVTKKAKQ) form a coiled coil.

Belongs to the class I-like SAM-binding methyltransferase superfamily. RNA methyltransferase RlmE family. SPB1 subfamily. Component of the nucleolar and nucleoplasmic pre-60S ribosomal particle.

The protein localises to the nucleus. Its subcellular location is the nucleolus. It catalyses the reaction a ribonucleotide in rRNA + S-adenosyl-L-methionine = a 2'-O-methylribonucleotide in rRNA + S-adenosyl-L-homocysteine + H(+). Required for proper assembly of pre-ribosomal particles during the biogenesis of the 60S ribosomal subunit. This chain is AdoMet-dependent rRNA methyltransferase SPB1, found in Kluyveromyces lactis (strain ATCC 8585 / CBS 2359 / DSM 70799 / NBRC 1267 / NRRL Y-1140 / WM37) (Yeast).